A 547-amino-acid chain; its full sequence is uncharacterized protein (547 aa).

Positions arginine 38–glutamate 50 are enriched in basic and acidic residues. The disordered stretch occupies residues arginine 38–glutamate 89. The segment covering threonine 62 to serine 75 has biased composition (low complexity). 12 helical membrane-spanning segments follow: residues isoleucine 108 to phenylalanine 128, leucine 148 to serine 168, leucine 174 to serine 194, isoleucine 197 to alanine 217, glycine 233 to glycine 253, tryptophan 265 to methionine 285, methionine 346 to phenylalanine 366, glycine 377 to isoleucine 397, leucine 418 to threonine 438, tryptophan 445 to valine 465, alanine 478 to alanine 500, and serine 514 to glycine 534.

It belongs to the major facilitator superfamily. CAR1 family.

It localises to the membrane. This is an uncharacterized protein from Schizosaccharomyces pombe (strain 972 / ATCC 24843) (Fission yeast).